A 1416-amino-acid chain; its full sequence is DNA-directed RNA polymerase subunit beta' (1416 aa).

C68, C70, C83, and C86 together coordinate Zn(2+). Residues D458, D460, and D462 each contribute to the Mg(2+) site. C811, C884, C891, and C894 together coordinate Zn(2+).

It belongs to the RNA polymerase beta' chain family. The RNAP catalytic core consists of 2 alpha, 1 beta, 1 beta' and 1 omega subunit. When a sigma factor is associated with the core the holoenzyme is formed, which can initiate transcription. The cofactor is Mg(2+). Zn(2+) is required as a cofactor.

It carries out the reaction RNA(n) + a ribonucleoside 5'-triphosphate = RNA(n+1) + diphosphate. DNA-dependent RNA polymerase catalyzes the transcription of DNA into RNA using the four ribonucleoside triphosphates as substrates. This is DNA-directed RNA polymerase subunit beta' from Francisella philomiragia subsp. philomiragia (strain ATCC 25017 / CCUG 19701 / FSC 153 / O#319-036).